Here is a 66-residue protein sequence, read N- to C-terminus: Large ribosomal subunit protein uL29 (66 aa).

It belongs to the universal ribosomal protein uL29 family.

This is Large ribosomal subunit protein uL29 from Helicobacter pylori (strain HPAG1).